The following is a 300-amino-acid chain: 33 kDa chaperonin (300 aa).

Intrachain disulfides connect Cys247–Cys249 and Cys280–Cys283.

This sequence belongs to the HSP33 family. In terms of processing, under oxidizing conditions two disulfide bonds are formed involving the reactive cysteines. Under reducing conditions zinc is bound to the reactive cysteines and the protein is inactive.

The protein resides in the cytoplasm. Redox regulated molecular chaperone. Protects both thermally unfolding and oxidatively damaged proteins from irreversible aggregation. Plays an important role in the bacterial defense system toward oxidative stress. This is 33 kDa chaperonin from Prochlorococcus marinus (strain MIT 9515).